The chain runs to 110 residues: T cell receptor alpha variable 39 (110 aa).

The N-terminal stretch at 1–18 is a signal peptide; it reads MKKLLAMILWLQLDRLSG. The 92-residue stretch at 19 to 110 folds into the Ig-like domain; the sequence is ELKVEQNPLF…LSATYFCAVD (92 aa). N-linked (GlcNAc...) asparagine glycans are attached at residues Asn36 and Asn42. The cysteines at positions 41 and 107 are disulfide-linked.

As to quaternary structure, alpha-beta TR is a heterodimer composed of an alpha and beta chain; disulfide-linked. The alpha-beta TR is associated with the transmembrane signaling CD3 coreceptor proteins to form the TR-CD3 (TcR or TCR). The assembly of alpha-beta TR heterodimers with CD3 occurs in the endoplasmic reticulum where a single alpha-beta TR heterodimer associates with one CD3D-CD3E heterodimer, one CD3G-CD3E heterodimer and one CD247 homodimer forming a stable octameric structure. CD3D-CD3E and CD3G-CD3E heterodimers preferentially associate with TR alpha and TR beta chains, respectively. The association of the CD247 homodimer is the last step of TcR assembly in the endoplasmic reticulum and is required for transport to the cell surface.

It is found in the cell membrane. Functionally, v region of the variable domain of T cell receptor (TR) alpha chain that participates in the antigen recognition. Alpha-beta T cell receptors are antigen specific receptors which are essential to the immune response and are present on the cell surface of T lymphocytes. Recognize peptide-major histocompatibility (MH) (pMH) complexes that are displayed by antigen presenting cells (APC), a prerequisite for efficient T cell adaptive immunity against pathogens. Binding of alpha-beta TR to pMH complex initiates TR-CD3 clustering on the cell surface and intracellular activation of LCK that phosphorylates the ITAM motifs of CD3G, CD3D, CD3E and CD247 enabling the recruitment of ZAP70. In turn ZAP70 phosphorylates LAT, which recruits numerous signaling molecules to form the LAT signalosome. The LAT signalosome propagates signal branching to three major signaling pathways, the calcium, the mitogen-activated protein kinase (MAPK) kinase and the nuclear factor NF-kappa-B (NF-kB) pathways, leading to the mobilization of transcription factors that are critical for gene expression and essential for T cell growth and differentiation. The T cell repertoire is generated in the thymus, by V-(D)-J rearrangement. This repertoire is then shaped by intrathymic selection events to generate a peripheral T cell pool of self-MH restricted, non-autoaggressive T cells. Post-thymic interaction of alpha-beta TR with the pMH complexes shapes TR structural and functional avidity. This chain is T cell receptor alpha variable 39, found in Homo sapiens (Human).